We begin with the raw amino-acid sequence, 277 residues long: UBX domain-containing protein 8 (277 aa).

Residue methionine 1 is a topological domain, cytoplasmic. A helical transmembrane segment spans residues 2–22; sequence ASRGVVGLFLLSALPLLCLEL. The Lumenal portion of the chain corresponds to 23–33; that stretch reads RRGIPSLGIKD. Residues 34-54 traverse the membrane as a helical segment; that stretch reads LILLSGRIFLLLALLTLVISV. Topologically, residues 55–277 are cytoplasmic; that stretch reads TTSWFNSLKP…NVEEKEQSSQ (223 aa). The tract at residues 64 to 89 is disordered; it reads PSQGHLKEGEKENEKRRRLVRERQQE. Residues 68-89 show a composition bias toward basic and acidic residues; it reads HLKEGEKENEKRRRLVRERQQE. The UBX domain maps to 193–269; sequence TAEEVVTVAL…GITVDTVLNV (77 aa).

Interacts with SYVN1 and VCP. As to expression, highly expressed in gonads. In testis, expressed in post-meiotic round spermatids, while in ovaries it is expressed in granulosa cells.

It is found in the endoplasmic reticulum membrane. Involved in endoplasmic reticulum-associated degradation (ERAD) for misfolded lumenal proteins, possibly by tethering VCP to the endoplasmic reticulum membrane. May play a role in reproduction. This is UBX domain-containing protein 8 (Ubxn8) from Mus musculus (Mouse).